A 122-amino-acid polypeptide reads, in one-letter code: High-potential iron-sulfur protein (122 aa).

The N-terminal stretch at 1-37 (MSDKPISKSRRDAVKVMLGTAAAIPMINLVGFGTARA) is a signal peptide. [4Fe-4S] cluster is bound by residues C80, C83, C100, and C114.

It belongs to the high-potential iron-sulfur protein (HiPIP) family. In terms of assembly, homodimer.

The protein resides in the periplasm. Its function is as follows. Specific class of high-redox-potential 4Fe-4S ferredoxins. Functions in anaerobic electron transport in most purple and in some other photosynthetic bacteria and in at least one genus (Paracoccus) of halophilic, denitrifying bacteria. This is High-potential iron-sulfur protein (hip) from Allochromatium vinosum (strain ATCC 17899 / DSM 180 / NBRC 103801 / NCIMB 10441 / D) (Chromatium vinosum).